We begin with the raw amino-acid sequence, 198 residues long: Na(+)-translocating NADH-quinone reductase subunit E (198 aa).

The next 6 helical transmembrane spans lie at 11-31, 35-55, 77-97, 110-130, 140-160, and 176-196; these read AVFIENMALSFFLGMCTFLAV, VSPAFGLGIAVTFVLGIAVPV, FLNFITFIGVIAGLVQILEMV, GIFLPLIAVNCAIFGGVSFMV, IVYGFGSGLGWMLAIVALAGL, and LGITFISVGLMALGFMSFSGI.

Belongs to the NqrDE/RnfAE family. Composed of six subunits; NqrA, NqrB, NqrC, NqrD, NqrE and NqrF.

Its subcellular location is the cell inner membrane. The catalysed reaction is a ubiquinone + n Na(+)(in) + NADH + H(+) = a ubiquinol + n Na(+)(out) + NAD(+). NQR complex catalyzes the reduction of ubiquinone-1 to ubiquinol by two successive reactions, coupled with the transport of Na(+) ions from the cytoplasm to the periplasm. NqrA to NqrE are probably involved in the second step, the conversion of ubisemiquinone to ubiquinol. The polypeptide is Na(+)-translocating NADH-quinone reductase subunit E (Haemophilus influenzae (strain ATCC 51907 / DSM 11121 / KW20 / Rd)).